Here is a 423-residue protein sequence, read N- to C-terminus: D-tagatose-1,6-bisphosphate aldolase subunit GatZ (423 aa).

It belongs to the GatZ/KbaZ family. GatZ subfamily. Forms a complex with GatY.

It participates in carbohydrate metabolism; D-tagatose 6-phosphate degradation; D-glyceraldehyde 3-phosphate and glycerone phosphate from D-tagatose 6-phosphate: step 2/2. Functionally, component of the tagatose-1,6-bisphosphate aldolase GatYZ that is required for full activity and stability of the Y subunit. Could have a chaperone-like function for the proper and stable folding of GatY. When expressed alone, GatZ does not show any aldolase activity. Is involved in the catabolism of galactitol. The protein is D-tagatose-1,6-bisphosphate aldolase subunit GatZ of Salmonella dublin (strain CT_02021853).